Here is a 345-residue protein sequence, read N- to C-terminus: Phosphoribosylformylglycinamidine cyclo-ligase (345 aa).

It belongs to the AIR synthase family.

The protein localises to the cytoplasm. It catalyses the reaction 2-formamido-N(1)-(5-O-phospho-beta-D-ribosyl)acetamidine + ATP = 5-amino-1-(5-phospho-beta-D-ribosyl)imidazole + ADP + phosphate + H(+). It participates in purine metabolism; IMP biosynthesis via de novo pathway; 5-amino-1-(5-phospho-D-ribosyl)imidazole from N(2)-formyl-N(1)-(5-phospho-D-ribosyl)glycinamide: step 2/2. The sequence is that of Phosphoribosylformylglycinamidine cyclo-ligase from Escherichia coli O7:K1 (strain IAI39 / ExPEC).